The sequence spans 729 residues: Polyribonucleotide nucleotidyltransferase (729 aa).

Positions 485 and 491 each coordinate Mg(2+). The 60-residue stretch at 552-611 folds into the KH domain; the sequence is PRITTMKVAEDKIRTIIGKGGATIKGLIESTGVSIDIDDSGVIQLFSPDKMALEEAQKQI. The S1 motif domain occupies 621–689; it reads GQTYQGKVSK…KQGRVKLEWK (69 aa).

Belongs to the polyribonucleotide nucleotidyltransferase family. Component of the RNA degradosome, which is a multiprotein complex involved in RNA processing and mRNA degradation. Requires Mg(2+) as cofactor.

It localises to the cytoplasm. It carries out the reaction RNA(n+1) + phosphate = RNA(n) + a ribonucleoside 5'-diphosphate. Its function is as follows. Involved in mRNA degradation. Catalyzes the phosphorolysis of single-stranded polyribonucleotides processively in the 3'- to 5'-direction. The chain is Polyribonucleotide nucleotidyltransferase from Legionella pneumophila (strain Corby).